Consider the following 295-residue polypeptide: MSGALDVLQMKEEDVLKFLAAGTHLGGTNLDFQMEQYIYKRKSDGIYIINLKRTWEKLLLAARAIVAIENPADVSVISSRNTGQRAVLKFAAATGATPIAGRFTPGTFTNQIQAAFREPRLLVVTDPRADHQPLTEASYVNLPTIALCNTDSPLRYVDIAIPCNNKGAHSVGLMWWMLAREVLRMRGTISREHPWEVMPDLYFYRDPEEIEKEEQAAAEKAVTKEEFQGEWTAPAPEFTAAQPEVADWSEGVQVPSVPIQQFPTEDWSARPFTEDWSAAPTAQATEWVGTTSELS.

Residue Ser2 is modified to N-acetylserine. Position 43 is a phosphoserine (Ser43). An N6-acetyllysine modification is found at Lys52. The interval 54–113 (TWEKLLLAARAIVAIENPADVSVISSRNTGQRAVLKFAAATGATPIAGRFTPGTFTNQIQ) is interaction with PPP1R16B. At Lys89 the chain carries N6-acetyllysine; alternate. Lys89 participates in a covalent cross-link: Glycyl lysine isopeptide (Lys-Gly) (interchain with G-Cter in SUMO2); alternate. Thr97 carries the post-translational modification Phosphothreonine. 2 laminin-binding regions span residues 161 to 180 (IPCNNKGAHSVGLMWWMLAR) and 205 to 229 (RDPEEIEKEEQAAAEKAVTKEEFQG). Residues 214-227 (EQAAAEKAVTKEEF) are compositionally biased toward basic and acidic residues. Positions 214–240 (EQAAAEKAVTKEEFQGEWTAPAPEFTA) are disordered. 4 [DE]-W-[ST] repeats span residues 230–232 (EWT), 247–249 (DWS), 266–268 (DWS), and 275–277 (DWS). Positions 242 to 295 (QPEVADWSEGVQVPSVPIQQFPTEDWSARPFTEDWSAAPTAQATEWVGTTSELS) are laminin-binding. The interval 263–295 (PTEDWSARPFTEDWSAAPTAQATEWVGTTSELS) is disordered. Residues 280 to 295 (PTAQATEWVGTTSELS) are compositionally biased toward polar residues.

It belongs to the universal ribosomal protein uS2 family. As to quaternary structure, monomer (37LRP) and homodimer (67LR). Component of the small ribosomal subunit. Mature ribosomes consist of a small (40S) and a large (60S) subunit. The 40S subunit contains about 33 different proteins and 1 molecule of RNA (18S). The 60S subunit contains about 49 different proteins and 3 molecules of RNA (28S, 5.8S and 5S). Interacts with RPS21. Interacts with several laminins including at least LAMB1. Interacts with MDK. The mature dimeric form interacts with PPP1R16B (via its fourth ankyrin repeat). Interacts with PPP1CA only in the presence of PPP1R16B. In terms of processing, acylated. Acylation may be a prerequisite for conversion of the monomeric 37 kDa laminin receptor precursor (37LRP) to the mature dimeric 67 kDa laminin receptor (67LR), and may provide a mechanism for membrane association. Post-translationally, cleaved by stromelysin-3 (ST3) at the cell surface. Cleavage by stromelysin-3 may be a mechanism to alter cell-extracellular matrix interactions.

It is found in the cell membrane. The protein localises to the cytoplasm. Its subcellular location is the nucleus. Its function is as follows. Required for the assembly and/or stability of the 40S ribosomal subunit. Required for the processing of the 20S rRNA-precursor to mature 18S rRNA in a late step of the maturation of 40S ribosomal subunits. Also functions as a cell surface receptor for laminin. Plays a role in cell adhesion to the basement membrane and in the consequent activation of signaling transduction pathways. May play a role in cell fate determination and tissue morphogenesis. Also acts as a receptor for several other ligands, including the pathogenic prion protein, viruses, and bacteria. Acts as a PPP1R16B-dependent substrate of PPP1CA. This is Small ribosomal subunit protein uS2 from Ovis aries (Sheep).